The following is a 213-amino-acid chain: dITP/XTP pyrophosphatase (213 aa).

17–22 (SNNAGK) lines the substrate pocket. Asp-78 functions as the Proton acceptor in the catalytic mechanism. Asp-78 provides a ligand contact to Mg(2+). Substrate contacts are provided by residues Ser-79, 164–167 (FGYD), Lys-187, and 192–193 (HR).

Belongs to the HAM1 NTPase family. Homodimer. The cofactor is Mg(2+).

The enzyme catalyses XTP + H2O = XMP + diphosphate + H(+). It carries out the reaction dITP + H2O = dIMP + diphosphate + H(+). It catalyses the reaction ITP + H2O = IMP + diphosphate + H(+). Pyrophosphatase that catalyzes the hydrolysis of nucleoside triphosphates to their monophosphate derivatives, with a high preference for the non-canonical purine nucleotides XTP (xanthosine triphosphate), dITP (deoxyinosine triphosphate) and ITP. Seems to function as a house-cleaning enzyme that removes non-canonical purine nucleotides from the nucleotide pool, thus preventing their incorporation into DNA/RNA and avoiding chromosomal lesions. The protein is dITP/XTP pyrophosphatase of Bordetella parapertussis (strain 12822 / ATCC BAA-587 / NCTC 13253).